The following is a 309-amino-acid chain: 2-phospho-L-lactate transferase (309 aa).

D50 and K89 together coordinate 7,8-didemethyl-8-hydroxy-5-deazariboflavin.

It belongs to the CofD family. Homodimer. The cofactor is Mg(2+).

The catalysed reaction is (2S)-lactyl-2-diphospho-5'-guanosine + 7,8-didemethyl-8-hydroxy-5-deazariboflavin = oxidized coenzyme F420-0 + GMP + H(+). Its pathway is cofactor biosynthesis; coenzyme F420 biosynthesis. Catalyzes the transfer of the 2-phospholactate moiety from (2S)-lactyl-2-diphospho-5'-guanosine to 7,8-didemethyl-8-hydroxy-5-deazariboflavin (FO) with the formation of oxidized coenzyme F420-0 and GMP. The protein is 2-phospho-L-lactate transferase of Methanococcus maripaludis (strain C5 / ATCC BAA-1333).